Consider the following 285-residue polypeptide: GPN-loop GTPase 3 (285 aa).

13 to 18 is a binding site for GTP; the sequence is GSGKST. The short motif at 72 to 74 is the Gly-Pro-Asn (GPN)-loop; involved in dimer interface element; the sequence is GPN. 174–177 contacts GTP; the sequence is TKMD. A disordered region spans residues 261–285; it reads KEPKENEEDKSENFDEFFQDRADEP. Over residues 265–277 the composition is skewed to acidic residues; sequence ENEEDKSENFDEF.

It belongs to the GPN-loop GTPase family. In terms of assembly, heterodimer with gpn1. Binds to RNA polymerase II (RNAPII).

Functionally, small GTPase required for proper localization of RNA polymerase II (RNAPII). May act at an RNAP assembly step prior to nuclear import. The sequence is that of GPN-loop GTPase 3 from Xenopus tropicalis (Western clawed frog).